The sequence spans 348 residues: Phosphoribosylformylglycinamidine cyclo-ligase (348 aa).

Belongs to the AIR synthase family.

The protein resides in the cytoplasm. The enzyme catalyses 2-formamido-N(1)-(5-O-phospho-beta-D-ribosyl)acetamidine + ATP = 5-amino-1-(5-phospho-beta-D-ribosyl)imidazole + ADP + phosphate + H(+). It functions in the pathway purine metabolism; IMP biosynthesis via de novo pathway; 5-amino-1-(5-phospho-D-ribosyl)imidazole from N(2)-formyl-N(1)-(5-phospho-D-ribosyl)glycinamide: step 2/2. This is Phosphoribosylformylglycinamidine cyclo-ligase from Geobacter metallireducens (strain ATCC 53774 / DSM 7210 / GS-15).